A 108-amino-acid polypeptide reads, in one-letter code: MAEEFVQQRLANNKVTIFVKFTCPFCRNALDILNKFSFKRGAYEIVDIKEFKPENELRDYFEQITGGRTVPRIFFGKTSIGGYSDLLEIDNMDALGDILSSIGVLRTC.

One can recognise a Glutaredoxin domain in the interval 3 to 106 (EEFVQQRLAN…DILSSIGVLR (104 aa)). C23 and C26 are disulfide-bonded.

Belongs to the glutaredoxin family.

It localises to the virion. Has thioltransferase and dehydroascorbate reductase activities. This Cowpox virus (strain GRI-90 / Grishak) (CPV) protein is Glutaredoxin-1 (OPG075).